The chain runs to 90 residues: MSTTANPLLAEINKGTDLKHAETQDKSAPIIENVPIKKNDHSSLLGEVEKGAQLKHVETQDRSAPVTEGATVKSNNHSALLGEIKSKAQE.

2 WH2 domains span residues Thr4–Ala21 and Asp40–Val57. The segment at Val57–Glu90 is disordered.

As to quaternary structure, monomer.

Functionally, is able to bind two actin monomers at high concentrations of G-actin. Inhibits actin polymerization by sequestering G-actin and stabilizing actin dimers. This chain is Actobindin-B/C (abnB), found in Dictyostelium discoideum (Social amoeba).